A 570-amino-acid polypeptide reads, in one-letter code: Probable metalloreductase AIM14 (570 aa).

Over 1 to 20 the chain is Extracellular; it reads MKESPLITLVKRHSETHFAN. The chain crosses the membrane as a helical span at residues 21 to 41; that stretch reads IKYGYYVLIISLVYLIGLALL. Residues 42-69 lie on the Cytoplasmic side of the membrane; sequence RAFGRRTPSRSSSAFKNKIIYRLYDIDP. The chain crosses the membrane as a helical span at residues 70–90; that stretch reads AIHLGILFFAVLIPFYYHYSL. The Extracellular portion of the chain corresponds to 91-141; that stretch reads TTQSTVYLKRLGRLSYALIPLNLFLTLRPNWFLRKNCTYTDFIPFHKWFSR. Positions 101-219 constitute a Ferric oxidoreductase domain; the sequence is LGRLSYALIP…NLVNVAFILL (119 aa). A helical membrane pass occupies residues 142-162; the sequence is IITVIGLLHGIFFIIKWAIDD. Over 163–176 the chain is Cytoplasmic; the sequence is NVSLKQKLILKTFN. The helical transmembrane segment at 177 to 197 threads the bilayer; it reads FAGFIISILVLFLLICSIGPM. The Extracellular portion of the chain corresponds to 198 to 373; the sequence is RRYNYRLFYI…PEECYSQGTN (176 aa). The FAD-binding FR-type domain maps to 250-388; sequence FAKSLMILNK…GGSGISFALP (139 aa). Residues 374–394 traverse the membrane as a helical segment; that stretch reads IAIICGGSGISFALPLFRHFF. At 395-570 the chain is on the cytoplasmic side; sequence NKENVKYLKM…INFVCETYGL (176 aa). A compositionally biased stretch (polar residues) spans 480–505; the sequence is ISNFNSENADSNDNTPETSHSPTKEN. The segment at 480–509 is disordered; sequence ISNFNSENADSNDNTPETSHSPTKENGSMI.

This sequence belongs to the ferric reductase (FRE) family. AIM14 subfamily. Interacts with ribosomes.

Its subcellular location is the membrane. Functionally, probable cell surface metalloreductase. May be involved in iron or copper homeostasis. This chain is Probable metalloreductase AIM14 (AIM14), found in Saccharomyces cerevisiae (strain ATCC 204508 / S288c) (Baker's yeast).